Reading from the N-terminus, the 75-residue chain is Small ribosomal subunit protein bS18 (75 aa).

Belongs to the bacterial ribosomal protein bS18 family. In terms of assembly, part of the 30S ribosomal subunit. Forms a tight heterodimer with protein bS6.

In terms of biological role, binds as a heterodimer with protein bS6 to the central domain of the 16S rRNA, where it helps stabilize the platform of the 30S subunit. The sequence is that of Small ribosomal subunit protein bS18 from Shewanella denitrificans (strain OS217 / ATCC BAA-1090 / DSM 15013).